A 1088-amino-acid chain; its full sequence is Methionine S-methyltransferase (1088 aa).

This sequence belongs to the class I-like SAM-binding methyltransferase superfamily. In terms of assembly, homotetramer.

Its subcellular location is the cytoplasm. The catalysed reaction is L-methionine + S-adenosyl-L-methionine = S-methyl-L-methionine + S-adenosyl-L-homocysteine. Functionally, catalyzes the S-methylmethionine (SMM) biosynthesis from adenosyl-L-homocysteine (AdoMet) and methionine. SMM biosynthesis (by MMT1) and degradation (by HMT-1, HMT-2 and HMT-3) constitute the SMM cycle in plants, which is probably required to achieve short term control of AdoMet level. Also able to catalyze the selenium-methylmethionine (SeMM) from AdoMet and selenium-methionine (SeMet). May play a role in phoem sulfur transport; such function is however not essential. This is Methionine S-methyltransferase (MMT1) from Wollastonia biflora (Beach sunflower).